The primary structure comprises 40 residues: Photosystem II reaction center protein J (40 aa).

A helical membrane pass occupies residues 8–28; the sequence is IPLWLIGTLTGILVIGLIGIF.

This sequence belongs to the PsbJ family. In terms of assembly, PSII is composed of 1 copy each of membrane proteins PsbA, PsbB, PsbC, PsbD, PsbE, PsbF, PsbH, PsbI, PsbJ, PsbK, PsbL, PsbM, PsbT, PsbX, PsbY, PsbZ, Psb30/Ycf12, at least 3 peripheral proteins of the oxygen-evolving complex and a large number of cofactors. It forms dimeric complexes.

The protein resides in the plastid. It is found in the chloroplast thylakoid membrane. One of the components of the core complex of photosystem II (PSII). PSII is a light-driven water:plastoquinone oxidoreductase that uses light energy to abstract electrons from H(2)O, generating O(2) and a proton gradient subsequently used for ATP formation. It consists of a core antenna complex that captures photons, and an electron transfer chain that converts photonic excitation into a charge separation. The sequence is that of Photosystem II reaction center protein J from Phalaenopsis aphrodite subsp. formosana (Moth orchid).